The following is a 182-amino-acid chain: Bifunctional protein PyrR (182 aa).

Residues 98 to 110 carry the PRPP-binding motif; sequence VVLVDDVLFTGRS.

It belongs to the purine/pyrimidine phosphoribosyltransferase family. PyrR subfamily.

It catalyses the reaction UMP + diphosphate = 5-phospho-alpha-D-ribose 1-diphosphate + uracil. In terms of biological role, regulates the transcription of the pyrimidine nucleotide (pyr) operon in response to exogenous pyrimidines. Also displays a weak uracil phosphoribosyltransferase activity which is not physiologically significant. The polypeptide is Bifunctional protein PyrR (Dehalococcoides mccartyi (strain ATCC BAA-2100 / JCM 16839 / KCTC 5957 / BAV1)).